The primary structure comprises 714 residues: Centromere/kinetochore protein zw10 (714 aa).

It belongs to the ZW10 family.

The protein localises to the cytoplasm. It is found in the nucleus. The protein resides in the chromosome. Its subcellular location is the centromere. It localises to the kinetochore. In terms of biological role, required for accurate chromosome segregation. The chain is Centromere/kinetochore protein zw10 (mit(1)15) from Drosophila grimshawi (Hawaiian fruit fly).